The sequence spans 132 residues: Small ribosomal subunit protein uS8 (132 aa).

It belongs to the universal ribosomal protein uS8 family. In terms of assembly, part of the 30S ribosomal subunit. Contacts proteins S5 and S12.

One of the primary rRNA binding proteins, it binds directly to 16S rRNA central domain where it helps coordinate assembly of the platform of the 30S subunit. This is Small ribosomal subunit protein uS8 from Desulfitobacterium hafniense (strain DSM 10664 / DCB-2).